Consider the following 342-residue polypeptide: Glycerol-3-phosphate dehydrogenase [NAD(P)+] (342 aa).

NADPH-binding residues include S13, W14, and K108. Residues K108, G139, and S141 each coordinate sn-glycerol 3-phosphate. An NADPH-binding site is contributed by A143. Sn-glycerol 3-phosphate-binding residues include K194, D247, S257, R258, and N259. K194 (proton acceptor) is an active-site residue. Position 258 (R258) interacts with NADPH. NADPH is bound by residues V282 and E284.

Belongs to the NAD-dependent glycerol-3-phosphate dehydrogenase family.

It localises to the cytoplasm. It catalyses the reaction sn-glycerol 3-phosphate + NAD(+) = dihydroxyacetone phosphate + NADH + H(+). It carries out the reaction sn-glycerol 3-phosphate + NADP(+) = dihydroxyacetone phosphate + NADPH + H(+). Its pathway is membrane lipid metabolism; glycerophospholipid metabolism. Catalyzes the reduction of the glycolytic intermediate dihydroxyacetone phosphate (DHAP) to sn-glycerol 3-phosphate (G3P), the key precursor for phospholipid synthesis. The protein is Glycerol-3-phosphate dehydrogenase [NAD(P)+] of Lactococcus lactis subsp. cremoris (strain SK11).